The primary structure comprises 586 residues: Arginine--tRNA ligase (586 aa).

The short motif at 131 to 141 (ANPTGPLHVGH) is the 'HIGH' region element.

It belongs to the class-I aminoacyl-tRNA synthetase family. As to quaternary structure, monomer.

Its subcellular location is the cytoplasm. It carries out the reaction tRNA(Arg) + L-arginine + ATP = L-arginyl-tRNA(Arg) + AMP + diphosphate. The protein is Arginine--tRNA ligase of Nitrosomonas europaea (strain ATCC 19718 / CIP 103999 / KCTC 2705 / NBRC 14298).